The primary structure comprises 340 residues: Eukaryotic translation initiation factor 3 subunit I (340 aa).

WD repeat units lie at residues 8-47 (GHERSLNQIRFNHDGDLLFSVAKDKILCAWYSANGERLGT), 50-89 (GHQGALWTVDVSPGTVLLATGAADNTVRLWNAKSGECVKV), 91-135 (DFPT…GEGN), 150-189 (CEQSKATVAGWSFLGKYIIAGHEDGSVSQYDSKTGEQLQN), 194-233 (EFDYQINDLQFSADRTYFITASKDKSAKIISCRDLQVMKT), and 291-330 (GHFGPLNTIAVHPAGTGYASGGEDGYVRVHHFDKPYFDFM).

This sequence belongs to the eIF-3 subunit I family. Component of the eukaryotic translation initiation factor 3 (eIF-3) complex.

The protein resides in the cytoplasm. Functionally, component of the eukaryotic translation initiation factor 3 (eIF-3) complex, which is involved in protein synthesis of a specialized repertoire of mRNAs and, together with other initiation factors, stimulates binding of mRNA and methionyl-tRNAi to the 40S ribosome. The eIF-3 complex specifically targets and initiates translation of a subset of mRNAs involved in cell proliferation. The sequence is that of Eukaryotic translation initiation factor 3 subunit I from Coccidioides immitis (strain RS) (Valley fever fungus).